Reading from the N-terminus, the 71-residue chain is uncharacterized protein (71 aa).

This is an uncharacterized protein from Bacillus subtilis (strain 168).